The following is a 380-amino-acid chain: Chaperone protein DnaJ (380 aa).

A J domain is found at 5-70 (DYYEVLGVER…SKRAAYDQYG (66 aa)). A CR-type zinc finger spans residues 139 to 217 (GTNVNIRVPT…CHGEGRVEES (79 aa)). Residues Cys-152, Cys-155, Cys-169, Cys-172, Cys-191, Cys-194, Cys-205, and Cys-208 each coordinate Zn(2+). 4 CXXCXGXG motif repeats span residues 152 to 159 (CKPCDGSG), 169 to 176 (CPTCGGIG), 191 to 198 (CPRCHGHG), and 205 to 212 (CDSCHGEG). A disordered region spans residues 224–245 (VPPGVDTGDRIRLSGEGEAGTQ).

Belongs to the DnaJ family. In terms of assembly, homodimer. Zn(2+) serves as cofactor.

It is found in the cytoplasm. In terms of biological role, participates actively in the response to hyperosmotic and heat shock by preventing the aggregation of stress-denatured proteins and by disaggregating proteins, also in an autonomous, DnaK-independent fashion. Unfolded proteins bind initially to DnaJ; upon interaction with the DnaJ-bound protein, DnaK hydrolyzes its bound ATP, resulting in the formation of a stable complex. GrpE releases ADP from DnaK; ATP binding to DnaK triggers the release of the substrate protein, thus completing the reaction cycle. Several rounds of ATP-dependent interactions between DnaJ, DnaK and GrpE are required for fully efficient folding. Also involved, together with DnaK and GrpE, in the DNA replication of plasmids through activation of initiation proteins. The polypeptide is Chaperone protein DnaJ (Pseudomonas syringae pv. syringae (strain B728a)).